A 185-amino-acid polypeptide reads, in one-letter code: Elongation factor P (185 aa).

It belongs to the elongation factor P family.

Its subcellular location is the cytoplasm. It functions in the pathway protein biosynthesis; polypeptide chain elongation. Functionally, involved in peptide bond synthesis. Stimulates efficient translation and peptide-bond synthesis on native or reconstituted 70S ribosomes in vitro. Probably functions indirectly by altering the affinity of the ribosome for aminoacyl-tRNA, thus increasing their reactivity as acceptors for peptidyl transferase. The polypeptide is Elongation factor P (Nostoc punctiforme (strain ATCC 29133 / PCC 73102)).